We begin with the raw amino-acid sequence, 271 residues long: MWGDKMRYFPIGVFDSGVGGLTVLKRLMEVLPQENYVYFGDTRRVPYGDRSKEEIKAFTKQIMNFLKKKNVKIFVIACNTISAVFEKEGKEIVFNVVEAGVKSAVETTCNKRIGVIGTRRTTEERIYSNKIKEINKSIEVYEVACPELVPLIEKGFYKTESVKRVVIECVKNLKEEKIDTLVLGCTHYPIVIDYIEEALIGENVRIVDPAERLAYDVKEYITRVNMINPNGSGQVQFYLSKMTQSFIEIAKILLEGKINNYNVSIVDITKY.

Substrate contacts are provided by residues Asp15–Ser16 and Tyr47–Gly48. The active-site Proton donor/acceptor is Cys78. Asn79 to Thr80 serves as a coordination point for substrate. Catalysis depends on Cys185, which acts as the Proton donor/acceptor. Thr186–His187 contacts substrate.

This sequence belongs to the aspartate/glutamate racemases family.

The enzyme catalyses L-glutamate = D-glutamate. It participates in cell wall biogenesis; peptidoglycan biosynthesis. Functionally, provides the (R)-glutamate required for cell wall biosynthesis. The sequence is that of Glutamate racemase 3 from Caldanaerobacter subterraneus subsp. tengcongensis (strain DSM 15242 / JCM 11007 / NBRC 100824 / MB4) (Thermoanaerobacter tengcongensis).